A 543-amino-acid chain; its full sequence is Chaperonin GroEL (543 aa).

ATP is bound by residues 29–32, 86–90, glycine 413, 476–478, and aspartate 492; these read TLGP, DGTTT, and NAA.

This sequence belongs to the chaperonin (HSP60) family. As to quaternary structure, forms a cylinder of 14 subunits composed of two heptameric rings stacked back-to-back. Interacts with the co-chaperonin GroES.

Its subcellular location is the cytoplasm. The catalysed reaction is ATP + H2O + a folded polypeptide = ADP + phosphate + an unfolded polypeptide.. Its function is as follows. Together with its co-chaperonin GroES, plays an essential role in assisting protein folding. The GroEL-GroES system forms a nano-cage that allows encapsulation of the non-native substrate proteins and provides a physical environment optimized to promote and accelerate protein folding. In Streptococcus pyogenes serotype M1, this protein is Chaperonin GroEL.